The following is a 396-amino-acid chain: Tryptophan synthase beta chain (396 aa).

Position 86 is an N6-(pyridoxal phosphate)lysine (lysine 86).

The protein belongs to the TrpB family. Tetramer of two alpha and two beta chains. Pyridoxal 5'-phosphate serves as cofactor.

It catalyses the reaction (1S,2R)-1-C-(indol-3-yl)glycerol 3-phosphate + L-serine = D-glyceraldehyde 3-phosphate + L-tryptophan + H2O. Its pathway is amino-acid biosynthesis; L-tryptophan biosynthesis; L-tryptophan from chorismate: step 5/5. Functionally, the beta subunit is responsible for the synthesis of L-tryptophan from indole and L-serine. This chain is Tryptophan synthase beta chain, found in Serratia proteamaculans (strain 568).